We begin with the raw amino-acid sequence, 1023 residues long: NLR family CARD domain-containing protein 4 (1023 aa).

The region spanning 1–88 (MNFIKENSQA…PVYQDLTGHS (88 aa)) is the CARD domain. The interval 95 to 298 (EEDLDVLAQS…HVGALTVEVG (204 aa)) is nucleotide-binding domain (NBD). The region spanning 163–476 (SPCLIEGESG…VSKGNSYLKK (314 aa)) is the NACHT domain. 169–176 (GESGKGKS) contributes to the ATP binding site. A winged-helix domain (WHD) region spans residues 356–463 (AHTQTMLFQT…RLSSLLKSRE (108 aa)). Phosphoserine is present on Ser533. LRR repeat units follow at residues 578–598 (FFQGKSLYINSENIPDYLFDF), 655–678 (MQKFKTLEVTLRDISKLNKQDIKY), 734–757 (VTDLQNLSIHDLHTQRLPGGLADS), 761–784 (LKNLLKLILDDIRLNEEDAKSLAE), 786–811 (LRNLKKMRLLHLTRLSDMGEGMDYIV), 823–846 (EMKLVDCCLTANSLKILAQNLHNL), 847–869 (VKLSVLDMSENYLEKAGSEALQG), 877–901 (LEQLSALMLPWCWDAYISLPNLLKQ), 910–932 (KLGLKNWRLRDEEIRSFGEFLEM), 935–962 (LRDLQQLDLAGHGVSSDGWLSFMDVFEN), 964–984 (KQLVFFDFGTEEFLPDAALVR), and 998–1020 (EARLTGWELDDYDISVIKGTFKL).

Homooligomer; homooligomerizes following activation of Naip proteins by pathogenic proteins such as S.typhimurium (Salmonella) flagellin or PrgJ. Component of the NLRC4 inflammasome, at least composed of NLRC4, caspase-1 (CASP1) and some NAIP family member. Interacts with EIF2AK2/PKR. Post-translationally, phosphorylated at Ser-533 following infection of macrophages with S.typhimurium (Salmonella). Phosphorylation is essential for NLRC4 inflammasome function to promote caspase-1 activation and pyroptosis. PRKCD phosphorylates Ser-533 in vitro.

It is found in the cytoplasm. The protein localises to the cytosol. Functionally, key component of inflammasomes that indirectly senses specific proteins from pathogenic bacteria and fungi and responds by assembling an inflammasome complex that promotes caspase-1 activation, cytokine production and macrophage pyroptosis. The NLRC4 inflammasome is activated as part of the innate immune response to a range of intracellular bacteria. The chain is NLR family CARD domain-containing protein 4 (Nlrc4) from Rattus norvegicus (Rat).